The sequence spans 502 residues: Probable cytosol aminopeptidase (502 aa).

Lys275 and Asp280 together coordinate Mn(2+). Lys287 is a catalytic residue. Mn(2+) is bound by residues Asp298, Asp357, and Glu359. Arg361 is an active-site residue.

This sequence belongs to the peptidase M17 family. The cofactor is Mn(2+).

It is found in the cytoplasm. The enzyme catalyses Release of an N-terminal amino acid, Xaa-|-Yaa-, in which Xaa is preferably Leu, but may be other amino acids including Pro although not Arg or Lys, and Yaa may be Pro. Amino acid amides and methyl esters are also readily hydrolyzed, but rates on arylamides are exceedingly low.. It carries out the reaction Release of an N-terminal amino acid, preferentially leucine, but not glutamic or aspartic acids.. Its function is as follows. Presumably involved in the processing and regular turnover of intracellular proteins. Catalyzes the removal of unsubstituted N-terminal amino acids from various peptides. The chain is Probable cytosol aminopeptidase from Ralstonia pickettii (strain 12J).